Reading from the N-terminus, the 447-residue chain is UDP-N-acetylmuramate--L-alanine ligase (447 aa).

108–114 is a binding site for ATP; the sequence is GSHGKTS.

Belongs to the MurCDEF family.

The protein resides in the cytoplasm. It carries out the reaction UDP-N-acetyl-alpha-D-muramate + L-alanine + ATP = UDP-N-acetyl-alpha-D-muramoyl-L-alanine + ADP + phosphate + H(+). It participates in cell wall biogenesis; peptidoglycan biosynthesis. Functionally, cell wall formation. This Listeria monocytogenes serotype 4b (strain F2365) protein is UDP-N-acetylmuramate--L-alanine ligase.